A 329-amino-acid polypeptide reads, in one-letter code: Glycerol-3-phosphate dehydrogenase [NAD(P)+] (329 aa).

NADPH is bound by residues Trp-11, Arg-30, and Lys-103. Sn-glycerol 3-phosphate-binding residues include Lys-103, Gly-132, and Ser-134. Ala-136 provides a ligand contact to NADPH. Residues Lys-187, Asp-240, Ser-250, Arg-251, and Asn-252 each coordinate sn-glycerol 3-phosphate. Lys-187 (proton acceptor) is an active-site residue. An NADPH-binding site is contributed by Arg-251. Val-275 and Glu-277 together coordinate NADPH.

The protein belongs to the NAD-dependent glycerol-3-phosphate dehydrogenase family.

It localises to the cytoplasm. The catalysed reaction is sn-glycerol 3-phosphate + NAD(+) = dihydroxyacetone phosphate + NADH + H(+). It carries out the reaction sn-glycerol 3-phosphate + NADP(+) = dihydroxyacetone phosphate + NADPH + H(+). Its pathway is membrane lipid metabolism; glycerophospholipid metabolism. Functionally, catalyzes the reduction of the glycolytic intermediate dihydroxyacetone phosphate (DHAP) to sn-glycerol 3-phosphate (G3P), the key precursor for phospholipid synthesis. The polypeptide is Glycerol-3-phosphate dehydrogenase [NAD(P)+] (Dechloromonas aromatica (strain RCB)).